The following is a 211-amino-acid chain: 3-demethoxyubiquinol 3-hydroxylase (211 aa).

Glutamate 60, glutamate 90, histidine 93, glutamate 142, glutamate 174, and histidine 177 together coordinate Fe cation.

The protein belongs to the COQ7 family. Fe cation serves as cofactor.

It is found in the cell membrane. It catalyses the reaction a 5-methoxy-2-methyl-3-(all-trans-polyprenyl)benzene-1,4-diol + AH2 + O2 = a 3-demethylubiquinol + A + H2O. It participates in cofactor biosynthesis; ubiquinone biosynthesis. In terms of biological role, catalyzes the hydroxylation of 2-nonaprenyl-3-methyl-6-methoxy-1,4-benzoquinol during ubiquinone biosynthesis. The chain is 3-demethoxyubiquinol 3-hydroxylase from Francisella tularensis subsp. novicida (strain U112).